We begin with the raw amino-acid sequence, 252 residues long: DNA repair protein RecO (252 aa).

This sequence belongs to the RecO family.

Involved in DNA repair and RecF pathway recombination. The chain is DNA repair protein RecO from Rhodospirillum rubrum (strain ATCC 11170 / ATH 1.1.1 / DSM 467 / LMG 4362 / NCIMB 8255 / S1).